The following is a 444-amino-acid chain: Tubulin beta chain (444 aa).

Positions 11, 69, 138, 142, 143, 144, 204, and 226 each coordinate GTP. Glutamate 69 serves as a coordination point for Mg(2+).

The protein belongs to the tubulin family. In terms of assembly, dimer of alpha and beta chains. A typical microtubule is a hollow water-filled tube with an outer diameter of 25 nm and an inner diameter of 15 nM. Alpha-beta heterodimers associate head-to-tail to form protofilaments running lengthwise along the microtubule wall with the beta-tubulin subunit facing the microtubule plus end conferring a structural polarity. Microtubules usually have 13 protofilaments but different protofilament numbers can be found in some organisms and specialized cells. Requires Mg(2+) as cofactor.

It localises to the cytoplasm. The protein resides in the cytoskeleton. Functionally, tubulin is the major constituent of microtubules, a cylinder consisting of laterally associated linear protofilaments composed of alpha- and beta-tubulin heterodimers. Microtubules grow by the addition of GTP-tubulin dimers to the microtubule end, where a stabilizing cap forms. Below the cap, tubulin dimers are in GDP-bound state, owing to GTPase activity of alpha-tubulin. This chain is Tubulin beta chain, found in Phytophthora cinnamomi (Cinnamon fungus).